The following is a 553-amino-acid chain: Glucagon-like peptide 2 receptor (553 aa).

The Extracellular segment spans residues 1 to 173; sequence MKLGSSRAGP…SFKQNVDRYA (173 aa). Disulfide bonds link C83–C105, C96–C137, and C118–C159. N97, N113, N148, and N162 each carry an N-linked (GlcNAc...) asparagine glycan. A helical membrane pass occupies residues 174-198; sequence LLSTLQLMYTVGYSFSLISLFLALT. Residues 199 to 210 lie on the Cytoplasmic side of the membrane; it reads LLLFLRKLHCTR. A helical membrane pass occupies residues 211–235; it reads NYIHMNLFASFILRTLAVLVKDVVF. The Extracellular segment spans residues 236–261; the sequence is YNSYSKRPDNENGWMSYLSEMSTSCR. The helical transmembrane segment at 262–285 threads the bilayer; the sequence is SVQVLLHYFVGANYLWLLVEGLYL. Topologically, residues 286–299 are cytoplasmic; the sequence is HTLLEPTVLPERRL. The chain crosses the membrane as a helical span at residues 300–321; the sequence is WPRYLLLGWAFPVLFVVPWGFA. The Extracellular segment spans residues 322–339; it reads RAHLENTGCWTTNGNKKI. Residues 340–362 traverse the membrane as a helical segment; that stretch reads WWIIRGPMMLCVTVNFFIFLKIL. The Cytoplasmic segment spans residues 363–386; the sequence is KLLISKLKAHQMCFRDYKYRLAKS. The chain crosses the membrane as a helical span at residues 387 to 405; the sequence is TLVLIPLLGVHEILFSFIT. The Extracellular segment spans residues 406–417; the sequence is DDQVEGFAKLIR. Residues 418–438 form a helical membrane-spanning segment; it reads LFIQLTLSSFHGFLVALQYGF. Topologically, residues 439 to 550 are cytoplasmic; it reads ANGEVKAELR…ANTMEEILEE (112 aa).

This sequence belongs to the G-protein coupled receptor 2 family.

Its subcellular location is the cell membrane. Its function is as follows. This is a receptor for glucagon-like peptide 2. The activity of this receptor is mediated by G proteins which activate adenylyl cyclase. In Homo sapiens (Human), this protein is Glucagon-like peptide 2 receptor (GLP2R).